Here is a 215-residue protein sequence, read N- to C-terminus: Penicillin-binding protein activator LpoB (215 aa).

Positions 1-19 (MMKMCRYALITALAIFLAG) are cleaved as a signal peptide. C20 carries the N-palmitoyl cysteine lipid modification. C20 is lipidated: S-diacylglycerol cysteine. Residues 28–78 (APVEEAKPQPQQPAQPQPTVPTVPAVPSVPAQPGPIEHQDQQSGQPAPRVR) form a disordered region. Positions 37–48 (PQQPAQPQPTVP) are enriched in pro residues. Residues 49 to 58 (TVPAVPSVPA) show a composition bias toward low complexity.

It belongs to the LpoB family. In terms of assembly, interacts with PBP1b.

It is found in the cell outer membrane. In terms of biological role, regulator of peptidoglycan synthesis that is essential for the function of penicillin-binding protein 1B (PBP1b). This chain is Penicillin-binding protein activator LpoB, found in Klebsiella pneumoniae subsp. pneumoniae (strain ATCC 700721 / MGH 78578).